Consider the following 186-residue polypeptide: Peptidoglycan-recognition protein SD (186 aa).

A signal peptide spans 1–18 (MTWIGLLIVGLTAIAVQG). Residues 47–169 (AVIAHTAGGA…RQVSATMSPG (123 aa)) form the N-acetylmuramoyl-L-alanine amidase domain. Cysteine 57 and cysteine 63 form a disulfide bridge. The N-linked (GlcNAc...) asparagine glycan is linked to asparagine 181.

This sequence belongs to the N-acetylmuramoyl-L-alanine amidase 2 family.

It is found in the secreted. Functionally, peptidoglycan-recognition protein that plays a key role in innate immunity by binding to peptidoglycans (PGN) of Gram-positive bacteria and activating the Toll pathway. Has no activity against on Gram-negative bacteria and fungi. Shows some partial redundancy with PRPGP-SA in Gram-positive bacteria recognition. May act by activating the proteolytic cleavage of Spatzle and the subsequent activation of Toll pathway. Recognizes S.aureus PGN. The polypeptide is Peptidoglycan-recognition protein SD (PGRP-SD) (Drosophila simulans (Fruit fly)).